The chain runs to 143 residues: Large-conductance mechanosensitive channel (143 aa).

3 helical membrane passes run 21–41 (VGVI…ADII), 44–64 (VVGL…LGTV), and 86–106 (GNFI…FMMV).

The protein belongs to the MscL family. In terms of assembly, homopentamer.

It localises to the cell inner membrane. In terms of biological role, channel that opens in response to stretch forces in the membrane lipid bilayer. May participate in the regulation of osmotic pressure changes within the cell. This chain is Large-conductance mechanosensitive channel, found in Variovorax paradoxus (strain S110).